We begin with the raw amino-acid sequence, 190 residues long: Probable nicotinate-nucleotide adenylyltransferase (190 aa).

Belongs to the NadD family.

It catalyses the reaction nicotinate beta-D-ribonucleotide + ATP + H(+) = deamido-NAD(+) + diphosphate. Its pathway is cofactor biosynthesis; NAD(+) biosynthesis; deamido-NAD(+) from nicotinate D-ribonucleotide: step 1/1. Its function is as follows. Catalyzes the reversible adenylation of nicotinate mononucleotide (NaMN) to nicotinic acid adenine dinucleotide (NaAD). In Borrelia hermsii (strain HS1 / DAH), this protein is Probable nicotinate-nucleotide adenylyltransferase.